The following is a 210-amino-acid chain: Oligoribonuclease (210 aa).

One can recognise an Exonuclease domain in the interval 12–177 (LVWIDLEMTG…ADIVESIREL (166 aa)). Residue Tyr-134 is part of the active site.

The protein belongs to the oligoribonuclease family.

The protein localises to the cytoplasm. Functionally, 3'-to-5' exoribonuclease specific for small oligoribonucleotides. In Corynebacterium diphtheriae (strain ATCC 700971 / NCTC 13129 / Biotype gravis), this protein is Oligoribonuclease.